We begin with the raw amino-acid sequence, 298 residues long: Cyclin-dependent kinase 1 (298 aa).

Serine 2 bears the N-acetylserine mark. The 288-residue stretch at 8 to 295 folds into the Protein kinase domain; it reads YKRLEKVGEG…ARRAAIHPYF (288 aa). ATP-binding positions include 14–22 and lysine 40; that span reads VGEGTYGVV. A Phosphotyrosine modification is found at tyrosine 19. Aspartate 136 serves as the catalytic Proton acceptor. Threonine 169 carries the phosphothreonine modification.

It belongs to the protein kinase superfamily. CMGC Ser/Thr protein kinase family. CDC2/CDKX subfamily. As to quaternary structure, forms a stable but non-covalent complex with the CKS1 protein and with a cyclin.

It catalyses the reaction L-seryl-[protein] + ATP = O-phospho-L-seryl-[protein] + ADP + H(+). It carries out the reaction L-threonyl-[protein] + ATP = O-phospho-L-threonyl-[protein] + ADP + H(+). Phosphorylation at Thr-18 or Tyr-19 inactivates the enzyme, while phosphorylation at Thr-169 activates it. Its function is as follows. Cyclin-dependent kinase that acts as a master regulator of the mitotic and meiotic cell cycles. Required to drive the G1-S transition. More than 200 substrates have been identified. Substrate specificity is in part regulated by the bound cyclin protein. Phosphorylates YTA7 during S-phase to promote transcription of histones. May phosphorylate CNN1, to contribute to the enrichment of CNN1 on anaphase kinetochores. In Saccharomyces cerevisiae (strain ATCC 204508 / S288c) (Baker's yeast), this protein is Cyclin-dependent kinase 1.